The sequence spans 550 residues: 2-succinyl-5-enolpyruvyl-6-hydroxy-3-cyclohexene-1-carboxylate synthase (550 aa).

Belongs to the TPP enzyme family. MenD subfamily. As to quaternary structure, homodimer. Requires Mg(2+) as cofactor. The cofactor is Mn(2+). Thiamine diphosphate serves as cofactor.

The enzyme catalyses isochorismate + 2-oxoglutarate + H(+) = 5-enolpyruvoyl-6-hydroxy-2-succinyl-cyclohex-3-ene-1-carboxylate + CO2. Its pathway is quinol/quinone metabolism; 1,4-dihydroxy-2-naphthoate biosynthesis; 1,4-dihydroxy-2-naphthoate from chorismate: step 2/7. It functions in the pathway quinol/quinone metabolism; menaquinone biosynthesis. Its function is as follows. Catalyzes the thiamine diphosphate-dependent decarboxylation of 2-oxoglutarate and the subsequent addition of the resulting succinic semialdehyde-thiamine pyrophosphate anion to isochorismate to yield 2-succinyl-5-enolpyruvyl-6-hydroxy-3-cyclohexene-1-carboxylate (SEPHCHC). The polypeptide is 2-succinyl-5-enolpyruvyl-6-hydroxy-3-cyclohexene-1-carboxylate synthase (Flavobacterium psychrophilum (strain ATCC 49511 / DSM 21280 / CIP 103535 / JIP02/86)).